The sequence spans 887 residues: Phosphatidylinositol 3-kinase catalytic subunit type 3 (887 aa).

In terms of domain architecture, C2 PI3K-type spans 35–184 (YKAVLEDPML…LAKLTKAHRQ (150 aa)). Residues 149 to 170 (VEADGSEPTRTPGRTSSTLSED) are disordered. Positions 156 to 170 (PTRTPGRTSSTLSED) are enriched in polar residues. T163 bears the Phosphothreonine; by AMPK mark. Position 165 is a phosphoserine; by AMPK (S165). A phosphoserine mark is found at S244, S261, and S282. The PIK helical domain occupies 283–520 (DHDLKPNATT…PKTHEMYLNV (238 aa)). Residues 416-467 (EPTKKDSQASVSESLSSSGVSSADIDSSQIITNPLPPVASPPPASKSKEVSD) are disordered. The segment covering 423–444 (QASVSESLSSSGVSSADIDSSQ) has biased composition (low complexity). Over residues 449-459 (PLPPVASPPPA) the composition is skewed to pro residues. Positions 605-871 (IPETATLFKS…LIDESVHALF (267 aa)) constitute a PI3K/PI4K catalytic domain. Positions 611-617 (LFKSALM) are G-loop. Residues 740-748 (GVGDRHLDN) are catalytic loop. Positions 759 to 780 (HIDFGYILGRDPKPLPPPMKLN) are activation loop.

It belongs to the PI3/PI4-kinase family. As to quaternary structure, component of the PI3K (PI3KC3/PI3K-III/class III phosphatidylinositol 3-kinase) complex the core of which is composed of the catalytic subunit PIK3C3, the regulatory subunit PIK3R4 and BECN1 associating with additional regulatory/auxiliary subunits to form alternative complex forms. Alternative complex forms containing a fourth regulatory subunit in a mutually exclusive manner are: the PI3K complex I (PI3KC3-C1) containing ATG14, and the PI3K complex II (PI3KC3-C2) containing UVRAG. PI3KC3-C1 displays a V-shaped architecture with PIK3R4 serving as a bridge between PIK3C3 and the ATG14:BECN1 subcomplex. Both, PI3KC3-C1 and PI3KC3-C2, can associate with further regulatory subunits such as RUBCN, SH3GLB1/Bif-1 and AMBRA1. PI3KC3-C1 probably associates with PIK3CB. Interacts with RAB7A in the presence of PIK3R4. Interacts with AMBRA1. Interacts with BECN1P1/BECN2. Interacts with SLAMF1. May interact with DYN2. May be a component of a complex composed of RAB5A (in GDP-bound form), DYN2 and PIK3C3. Interacts with NCKAP1L. Interacts with ATG14; this interaction is increased in the absence of TMEM39A. Interacts with STEEP1; the interaction is STING1-dependent and required for trafficking of STING1 from the endoplasmic reticulum. Interacts with YWHAG. Interacts with ARMC3. Mn(2+) serves as cofactor. Ubiquitinated via 'Lys-29'- and 'Lys-48'-linked ubiquitination by UBE3C, promoting its degradation. Deubiquitination by ZRANB1/TRABID promotes its stabilization, leading to autophagosome maturation.

It localises to the midbody. Its subcellular location is the late endosome. The protein localises to the cytoplasmic vesicle. It is found in the autophagosome. It catalyses the reaction a 1,2-diacyl-sn-glycero-3-phospho-(1D-myo-inositol) + ATP = a 1,2-diacyl-sn-glycero-3-phospho-(1D-myo-inositol-3-phosphate) + ADP + H(+). Functionally, catalytic subunit of the PI3K complex that mediates formation of phosphatidylinositol 3-phosphate; different complex forms are believed to play a role in multiple membrane trafficking pathways: PI3KC3-C1 is involved in initiation of autophagosomes and PI3KC3-C2 in maturation of autophagosomes and endocytosis. As part of PI3KC3-C1, promotes endoplasmic reticulum membrane curvature formation prior to vesicle budding. Involved in regulation of degradative endocytic trafficking and required for the abscission step in cytokinesis, probably in the context of PI3KC3-C2. Involved in the transport of lysosomal enzyme precursors to lysosomes. Required for transport from early to late endosomes. The polypeptide is Phosphatidylinositol 3-kinase catalytic subunit type 3 (Rattus norvegicus (Rat)).